The sequence spans 445 residues: Argininosuccinate synthase (445 aa).

Residues 17–25 and alanine 43 contribute to the ATP site; that span reads AFSGGLDTS. L-citrulline is bound at residue tyrosine 99. The ATP site is built by glycine 129 and threonine 131. The L-aspartate site is built by threonine 131, asparagine 135, and aspartate 136. Asparagine 135 contacts L-citrulline. Aspartate 136 lines the ATP pocket. Positions 139 and 192 each coordinate L-citrulline. Residue aspartate 194 participates in ATP binding. 3 residues coordinate L-citrulline: threonine 201, glutamate 203, and glutamate 280.

The protein belongs to the argininosuccinate synthase family. Type 2 subfamily. In terms of assembly, homotetramer.

The protein resides in the cytoplasm. It carries out the reaction L-citrulline + L-aspartate + ATP = 2-(N(omega)-L-arginino)succinate + AMP + diphosphate + H(+). The protein operates within amino-acid biosynthesis; L-arginine biosynthesis; L-arginine from L-ornithine and carbamoyl phosphate: step 2/3. The polypeptide is Argininosuccinate synthase (Bradyrhizobium sp. (strain BTAi1 / ATCC BAA-1182)).